Here is a 258-residue protein sequence, read N- to C-terminus: Mediator of RNA polymerase II transcription subunit 7 (258 aa).

Disordered regions lie at residues 1-39 (MLPG…PPPH) and 202-243 (EKET…PPSV). Positions 203 to 217 (KETEEDEEMKEDDEE) are enriched in acidic residues. Over residues 220 to 229 (STSSSEGNQK) the composition is skewed to polar residues.

The protein belongs to the Mediator complex subunit 7 family. As to quaternary structure, component of the Mediator complex.

It is found in the nucleus. Functionally, component of the Mediator complex, a coactivator involved in the regulated transcription of nearly all RNA polymerase II-dependent genes. Mediator functions as a bridge to convey information from gene-specific regulatory proteins to the basal RNA polymerase II transcription machinery. Mediator is recruited to promoters by direct interactions with regulatory proteins and serves as a scaffold for the assembly of a functional preinitiation complex with RNA polymerase II and the general transcription factors. This chain is Mediator of RNA polymerase II transcription subunit 7 (let-49), found in Caenorhabditis briggsae.